The following is a 286-amino-acid chain: 4-hydroxy-3-methylbut-2-enyl diphosphate reductase (286 aa).

[4Fe-4S] cluster is bound at residue Cys-12. Positions 47 and 80 each coordinate (2E)-4-hydroxy-3-methylbut-2-enyl diphosphate. Residues His-47 and His-80 each coordinate dimethylallyl diphosphate. Residues His-47 and His-80 each coordinate isopentenyl diphosphate. Cys-102 is a [4Fe-4S] cluster binding site. His-130 is a (2E)-4-hydroxy-3-methylbut-2-enyl diphosphate binding site. Position 130 (His-130) interacts with dimethylallyl diphosphate. His-130 is an isopentenyl diphosphate binding site. Glu-132 serves as the catalytic Proton donor. (2E)-4-hydroxy-3-methylbut-2-enyl diphosphate is bound at residue Thr-170. Cys-198 serves as a coordination point for [4Fe-4S] cluster. (2E)-4-hydroxy-3-methylbut-2-enyl diphosphate is bound by residues Ser-226, Asn-228, and Ser-270. Residues Ser-226, Asn-228, and Ser-270 each coordinate dimethylallyl diphosphate. Isopentenyl diphosphate is bound by residues Ser-226, Asn-228, and Ser-270.

It belongs to the IspH family. It depends on [4Fe-4S] cluster as a cofactor.

It carries out the reaction isopentenyl diphosphate + 2 oxidized [2Fe-2S]-[ferredoxin] + H2O = (2E)-4-hydroxy-3-methylbut-2-enyl diphosphate + 2 reduced [2Fe-2S]-[ferredoxin] + 2 H(+). It catalyses the reaction dimethylallyl diphosphate + 2 oxidized [2Fe-2S]-[ferredoxin] + H2O = (2E)-4-hydroxy-3-methylbut-2-enyl diphosphate + 2 reduced [2Fe-2S]-[ferredoxin] + 2 H(+). Its pathway is isoprenoid biosynthesis; dimethylallyl diphosphate biosynthesis; dimethylallyl diphosphate from (2E)-4-hydroxy-3-methylbutenyl diphosphate: step 1/1. The protein operates within isoprenoid biosynthesis; isopentenyl diphosphate biosynthesis via DXP pathway; isopentenyl diphosphate from 1-deoxy-D-xylulose 5-phosphate: step 6/6. Catalyzes the conversion of 1-hydroxy-2-methyl-2-(E)-butenyl 4-diphosphate (HMBPP) into a mixture of isopentenyl diphosphate (IPP) and dimethylallyl diphosphate (DMAPP). Acts in the terminal step of the DOXP/MEP pathway for isoprenoid precursor biosynthesis. The sequence is that of 4-hydroxy-3-methylbut-2-enyl diphosphate reductase from Desulfovibrio desulfuricans (strain ATCC 27774 / DSM 6949 / MB).